The primary structure comprises 493 residues: Cysteine--tRNA ligase (493 aa).

C31 lines the Zn(2+) pocket. The short motif at 33–43 (PTVYGDAHLGH) is the 'HIGH' region element. 3 residues coordinate Zn(2+): C226, H251, and E255. The 'KMSKS' region signature appears at 283–287 (KMGKS). An ATP-binding site is contributed by K286.

The protein belongs to the class-I aminoacyl-tRNA synthetase family. As to quaternary structure, monomer. Zn(2+) is required as a cofactor.

It localises to the cytoplasm. The enzyme catalyses tRNA(Cys) + L-cysteine + ATP = L-cysteinyl-tRNA(Cys) + AMP + diphosphate. This is Cysteine--tRNA ligase from Bacteroides thetaiotaomicron (strain ATCC 29148 / DSM 2079 / JCM 5827 / CCUG 10774 / NCTC 10582 / VPI-5482 / E50).